A 237-amino-acid chain; its full sequence is Protein CUSTOS (237 aa).

Disordered stretches follow at residues 1 to 23, 50 to 69, and 97 to 237; these read MAAP…LDRF, LRVR…TTPE, and ISKA…LGNE. Residues 52-62 are compositionally biased toward basic and acidic residues; the sequence is VRPDCHEHDGN. Residues 162-177 show a composition bias toward polar residues; the sequence is STLQQEPQSTPSNVCD. A compositionally biased stretch (basic residues) spans 181–190; that stretch reads PKKKRKKKKK. Residues 182–190 carry the Nucleolar localization signal (NLS1) motif; that stretch reads KKKRKKKKK. 2 stretches are compositionally biased toward basic and acidic residues: residues 203-216 and 225-237; these read ETMH…ELQA and KLEM…LGNE. Residues 217–225 carry the Nucleolar localization signal (NLS2) motif; sequence KRKKKKKQK.

This sequence belongs to the CUSTOS family. Interacts (via NLS1 and NLS2) with dvl2; the interaction is negatively regulated by Wnt stimulation. Interacts with csnk1a1. Interacts with ctnnb1; the interaction is positively regulated by Wnt stimulation. In terms of processing, phosphorylated by ck1/csnk1a1.

It localises to the nucleus envelope. Its function is as follows. Essential for Spemann-Mangold organizer formation and subsequent anterior head development in the embryo. Inhibits canonical Wnt signaling pathway by antagonizing nuclear import of beta-catenin (ctnnb1) during embryogenesis. The polypeptide is Protein CUSTOS (Xenopus laevis (African clawed frog)).